A 137-amino-acid polypeptide reads, in one-letter code: 1,4-dihydroxy-2-naphthoyl-CoA hydrolase (137 aa).

Residue Asp-12 is part of the active site.

This sequence belongs to the 4-hydroxybenzoyl-CoA thioesterase family. DHNA-CoA hydrolase subfamily.

It carries out the reaction 1,4-dihydroxy-2-naphthoyl-CoA + H2O = 1,4-dihydroxy-2-naphthoate + CoA + H(+). The protein operates within cofactor biosynthesis; phylloquinone biosynthesis. It functions in the pathway quinol/quinone metabolism; 1,4-dihydroxy-2-naphthoate biosynthesis; 1,4-dihydroxy-2-naphthoate from chorismate: step 7/7. Functionally, catalyzes the hydrolysis of 1,4-dihydroxy-2-naphthoyl-CoA (DHNA-CoA) to 1,4-dihydroxy-2-naphthoate (DHNA), a reaction involved in phylloquinone (vitamin K1) biosynthesis. The sequence is that of 1,4-dihydroxy-2-naphthoyl-CoA hydrolase from Acaryochloris marina (strain MBIC 11017).